Here is a 293-residue protein sequence, read N- to C-terminus: Probable metal transport system membrane protein CT_417 (293 aa).

The next 7 helical transmembrane spans lie at 18–38, 41–61, 68–88, 101–121, 135–155, 187–207, and 242–262; these read SLLA…YIVV, IVSI…IALW, LPIS…ICIG, IISM…SKLP, ILWV…FIVA, LLLI…GVIL, and FLGI…IAIL.

This sequence belongs to the ABC-3 integral membrane protein family.

It is found in the cell inner membrane. In terms of biological role, part of an ATP-driven transport system CT_415/CT_416/CT_417 for a metal. The sequence is that of Probable metal transport system membrane protein CT_417 from Chlamydia trachomatis serovar D (strain ATCC VR-885 / DSM 19411 / UW-3/Cx).